The following is a 464-amino-acid chain: Kynureninase 2 (464 aa).

Residues leucine 135, threonine 136, 163–166, aspartate 248, histidine 251, and tyrosine 273 each bind pyridoxal 5'-phosphate; that span reads FPSD. Lysine 274 is subject to N6-(pyridoxal phosphate)lysine. Positions 313 and 341 each coordinate pyridoxal 5'-phosphate.

It belongs to the kynureninase family. Homodimer. Requires pyridoxal 5'-phosphate as cofactor.

The protein resides in the cytoplasm. It carries out the reaction L-kynurenine + H2O = anthranilate + L-alanine + H(+). It catalyses the reaction 3-hydroxy-L-kynurenine + H2O = 3-hydroxyanthranilate + L-alanine + H(+). The protein operates within amino-acid degradation; L-kynurenine degradation; L-alanine and anthranilate from L-kynurenine: step 1/1. It functions in the pathway cofactor biosynthesis; NAD(+) biosynthesis; quinolinate from L-kynurenine: step 2/3. Functionally, catalyzes the cleavage of L-kynurenine (L-Kyn) and L-3-hydroxykynurenine (L-3OHKyn) into anthranilic acid (AA) and 3-hydroxyanthranilic acid (3-OHAA), respectively. The chain is Kynureninase 2 (bna5-2) from Aspergillus clavatus (strain ATCC 1007 / CBS 513.65 / DSM 816 / NCTC 3887 / NRRL 1 / QM 1276 / 107).